The chain runs to 333 residues: Holliday junction branch migration complex subunit RuvB (333 aa).

Residues 1-181 are large ATPase domain (RuvB-L); it reads MNDILNKEPM…FGISSHMEYY (181 aa). ATP is bound by residues leucine 20, arginine 21, glycine 62, lysine 65, threonine 66, threonine 67, 128–130, arginine 171, tyrosine 181, and arginine 218; that span reads EDF. Mg(2+) is bound at residue threonine 66. The tract at residues 182–252 is small ATPAse domain (RuvB-S); it reads QERDLEEIVK…ITDKALSILD (71 aa). The interval 255–333 is head domain (RuvB-H); the sequence is AAGLDYIDQK…HLGYVYNEED (79 aa). The DNA site is built by arginine 291, arginine 310, and arginine 315.

This sequence belongs to the RuvB family. In terms of assembly, homohexamer. Forms an RuvA(8)-RuvB(12)-Holliday junction (HJ) complex. HJ DNA is sandwiched between 2 RuvA tetramers; dsDNA enters through RuvA and exits via RuvB. An RuvB hexamer assembles on each DNA strand where it exits the tetramer. Each RuvB hexamer is contacted by two RuvA subunits (via domain III) on 2 adjacent RuvB subunits; this complex drives branch migration. In the full resolvosome a probable DNA-RuvA(4)-RuvB(12)-RuvC(2) complex forms which resolves the HJ.

It is found in the cytoplasm. It catalyses the reaction ATP + H2O = ADP + phosphate + H(+). Functionally, the RuvA-RuvB-RuvC complex processes Holliday junction (HJ) DNA during genetic recombination and DNA repair, while the RuvA-RuvB complex plays an important role in the rescue of blocked DNA replication forks via replication fork reversal (RFR). RuvA specifically binds to HJ cruciform DNA, conferring on it an open structure. The RuvB hexamer acts as an ATP-dependent pump, pulling dsDNA into and through the RuvAB complex. RuvB forms 2 homohexamers on either side of HJ DNA bound by 1 or 2 RuvA tetramers; 4 subunits per hexamer contact DNA at a time. Coordinated motions by a converter formed by DNA-disengaged RuvB subunits stimulates ATP hydrolysis and nucleotide exchange. Immobilization of the converter enables RuvB to convert the ATP-contained energy into a lever motion, pulling 2 nucleotides of DNA out of the RuvA tetramer per ATP hydrolyzed, thus driving DNA branch migration. The RuvB motors rotate together with the DNA substrate, which together with the progressing nucleotide cycle form the mechanistic basis for DNA recombination by continuous HJ branch migration. Branch migration allows RuvC to scan DNA until it finds its consensus sequence, where it cleaves and resolves cruciform DNA. The polypeptide is Holliday junction branch migration complex subunit RuvB (Lactococcus lactis subsp. lactis (strain IL1403) (Streptococcus lactis)).